Consider the following 223-residue polypeptide: MARLGALLLAAALGALLSFALLAAAVASDYWYILEVADAGNGSAWPGRAELLSSHSGLWRICEGQNGCIPLVDPFASESLDVSTSVQHLILLHRAVIVVLPLSLVLLVCGWICGLLSSLAQSVSLLLFTGCYFLLGSVLTLAGVSIYISYSHLAFAETVQQYGPQHMQGVRVSFGWSMALAWGSCALEAFSGTLLLSAAWTLSLSPPICGHLSPQQVGGRGGD.

A signal peptide spans 1 to 28 (MARLGALLLAAALGALLSFALLAAAVAS). A glycan (N-linked (GlcNAc...) asparagine) is linked at asparagine 41. The next 3 helical transmembrane spans lie at 96–116 (VIVVLPLSLVLLVCGWICGLL), 126–146 (LLFTGCYFLLGSVLTLAGVSI), and 176–196 (WSMALAWGSCALEAFSGTLLL).

It belongs to the PMP-22/EMP/MP20 family. Post-translationally, N-glycosylated.

Its subcellular location is the membrane. The protein localises to the endoplasmic reticulum. This Homo sapiens (Human) protein is Transmembrane protein 235 (TMEM235).